Consider the following 578-residue polypeptide: Matrix metalloproteinase-17 (578 aa).

Disordered regions lie at residues 1–22 (MGRR…PGPG) and 107–133 (PRCS…TKWS). The N-terminal stretch at 1 to 39 (MGRRPRGPGSPRGPGPPRPGPGLPPLLLVLALAAHGGCA) is a signal peptide. The span at 11 to 22 (PRGPGPPRPGPG) shows a compositional bias: pro residues. Positions 40–124 (APAPRAEDLS…PPGAQSRRKR (85 aa)) are excised as a propeptide. Positions 107–114 (PRCSLPDL) match the Cysteine switch motif. Zn(2+) is bound at residue Cys109. N-linked (GlcNAc...) asparagine glycosylation occurs at Asn136. Position 247 (His247) interacts with Zn(2+). Glu248 is an active-site residue. Residues His251 and His257 each coordinate Zn(2+). Residues 301 to 334 (PTAQLDTPEPEEPPLLPEPPNNRSSTPPQKDVPH) form a disordered region. N-linked (GlcNAc...) asparagine glycosylation occurs at Asn322. Hemopexin repeat units follow at residues 333–382 (PHRC…WRGL), 386–432 (LDSV…SLPP), 436–479 (DAVF…WRGV), and 480–527 (PSML…WLVC). Cys336 and Cys527 are disulfide-bonded. The GPI-anchor amidated serine moiety is linked to residue Ser558. Positions 559-578 (DAHRLALPSLLLLTPLLWGL) are cleaved as a propeptide — removed in mature form.

Belongs to the peptidase M10A family. Requires Zn(2+) as cofactor. It depends on Ca(2+) as a cofactor. Post-translationally, the precursor is cleaved by a furin endopeptidase. Expressed by monocytes and macrophages.

The protein resides in the cell membrane. Its subcellular location is the secreted. It localises to the extracellular space. The protein localises to the extracellular matrix. In terms of biological role, endopeptidase that degrades various components of the extracellular matrix, such as fibrin. May be involved in the activation of membrane-bound precursors of growth factors or inflammatory mediators, such as tumor necrosis factor-alpha. May also be involved in tumoral process. Not obvious if able to proteolytically activate progelatinase A. Does not hydrolyze collagen types I, II, III, IV and V, gelatin, fibronectin, laminin, decorin nor alpha1-antitrypsin. This Mus musculus (Mouse) protein is Matrix metalloproteinase-17 (Mmp17).